We begin with the raw amino-acid sequence, 311 residues long: GTPase Era (311 aa).

Residues 18–185 (RSGFVALIGA…AKYLAESVPN (168 aa)) form the Era-type G domain. The segment at 26–33 (GAPNAGKS) is G1. 26-33 (GAPNAGKS) contacts GTP. Residues 52-56 (QTTRA) form a G2 region. The tract at residues 73 to 76 (DTPG) is G3. GTP contacts are provided by residues 73-77 (DTPGI) and 135-138 (NKVD). The G4 stretch occupies residues 135–138 (NKVD). Residues 164-166 (ISA) are G5. Residues 216-293 (LHEELPYAST…HQFLFVKVRE (78 aa)) enclose the KH type-2 domain.

The protein belongs to the TRAFAC class TrmE-Era-EngA-EngB-Septin-like GTPase superfamily. Era GTPase family. Monomer.

Its subcellular location is the cytoplasm. It localises to the cell inner membrane. Its function is as follows. An essential GTPase that binds both GDP and GTP, with rapid nucleotide exchange. Plays a role in 16S rRNA processing and 30S ribosomal subunit biogenesis and possibly also in cell cycle regulation and energy metabolism. The chain is GTPase Era from Brucella melitensis biotype 1 (strain ATCC 23456 / CCUG 17765 / NCTC 10094 / 16M).